Here is a 74-residue protein sequence, read N- to C-terminus: ATP synthase subunit c (74 aa).

The next 2 helical transmembrane spans lie at 8 to 28 (FIGV…VSNI) and 52 to 72 (IGAG…MLLI).

It belongs to the ATPase C chain family. F-type ATPases have 2 components, F(1) - the catalytic core - and F(0) - the membrane proton channel. F(1) has five subunits: alpha(3), beta(3), gamma(1), delta(1), epsilon(1). F(0) has three main subunits: a(1), b(2) and c(10-14). The alpha and beta chains form an alternating ring which encloses part of the gamma chain. F(1) is attached to F(0) by a central stalk formed by the gamma and epsilon chains, while a peripheral stalk is formed by the delta and b chains.

Its subcellular location is the cell inner membrane. F(1)F(0) ATP synthase produces ATP from ADP in the presence of a proton or sodium gradient. F-type ATPases consist of two structural domains, F(1) containing the extramembraneous catalytic core and F(0) containing the membrane proton channel, linked together by a central stalk and a peripheral stalk. During catalysis, ATP synthesis in the catalytic domain of F(1) is coupled via a rotary mechanism of the central stalk subunits to proton translocation. Its function is as follows. Key component of the F(0) channel; it plays a direct role in translocation across the membrane. A homomeric c-ring of between 10-14 subunits forms the central stalk rotor element with the F(1) delta and epsilon subunits. This Rickettsia bellii (strain RML369-C) protein is ATP synthase subunit c.